Consider the following 418-residue polypeptide: Sterigmatocystin 8-O-methyltransferase (418 aa).

The propeptide occupies 1-41; the sequence is MALPSKAALVGLANTLSEQVKRYLATAGETKSPEDHKLCIE. 170–176 contributes to the substrate binding site; sequence MRSGASF. A substrate binding region spans residues 206–225; that stretch reads LFDYYSTVDEVRGRRFDLGM. S-adenosyl-L-methionine-binding positions include 254–255, D277, 297–298, and R313; these read GG and DI. H317 acts as the Proton acceptor in catalysis.

This sequence belongs to the class I-like SAM-binding methyltransferase superfamily. Cation-independent O-methyltransferase family. COMT subfamily.

The protein resides in the cytoplasm. Its subcellular location is the vacuole. The catalysed reaction is sterigmatocystin + S-adenosyl-L-methionine = 8-O-methylsterigmatocystin + S-adenosyl-L-homocysteine + H(+). The enzyme catalyses dihydrosterigmatocystin + S-adenosyl-L-methionine = 8-O-methyldihydrosterigmatocystin + S-adenosyl-L-homocysteine + H(+). The protein operates within mycotoxin biosynthesis; aflatoxin biosynthesis. Sterigmatocystin 8-O-methyltransferase; part of the gene cluster that mediates the biosynthesis of aflatoxins, a group of polyketide-derived furanocoumarins, and part of the most toxic and carcinogenic compounds among the known mycotoxins. The four major aflatoxins produced by A.parasiticus are aflatoxin B1 (AFB1), aflatoxin B2 (AFB2), aflatoxin G1 (AFG1) and aflatoxin G2 (AFG2). Within the aflatoxin pathway, the O-methyltransferase aflP uses both sterigmatocystin (ST) and dihydrosterigmatocystin (DHST) as substrates to yield O-methylsterigmatocystin (OMST) and dihydro-O-methylsterigmatocystin (DHOMST), respectively. The biosynthesis of aflatoxins begins with the norsolorinic acid synthase aflC that combines a hexanoyl starter unit produced by the fatty acid synthase aflA/aflB and 7 malonyl-CoA extender units to synthesize the precursor NOR. The second step is the conversion of NOR to averantin and requires the norsolorinic acid ketoreductase aflD, which catalyzes the dehydration of norsolorinic acid to form (1'S)-averantin. The norsolorinic acid reductases aflE and aflF may also play a role in the conversion of NOR to AVN. The cytochrome P450 monooxygenase aflG then catalyzes the hydroxylation of AVN to 5'hydroxyaverantin (HAVN). The next step is performed by the 5'-hydroxyaverantin dehydrogenase aflH that transforms HAVN to 5'-oxoaverantin (OAVN) which is further converted to averufin (AVF) by aflK that plays a dual role in the pathway, as a 5'-oxoaverantin cyclase that mediates conversion of 5'-oxoaverantin, as well as a versicolorin B synthase in a later step in the pathway. The averufin oxidase aflI catalyzes the conversion of AVF to versiconal hemiacetal acetate (VHA). VHA is then the substrate for the versiconal hemiacetal acetate esterase aflJ to yield versiconal (VAL). Versicolorin B synthase aflK then converts VAL to versicolorin B (VERB) by closing the bisfuran ring of aflatoxin which is required for DNA-binding, thus giving to aflatoxin its activity as a mutagen. Then, the activity of the versicolorin B desaturase aflL leads to versicolorin A (VERA). A branch point starts from VERB since it can also be converted to dihydrodemethylsterigmatocystin (DMDHST), probably also by aflL, VERA being a precursor for aflatoxins B1 and G1, and DMDHST for aflatoxins B2 and G2. Next, the versicolorin reductase aflM and the cytochrome P450 monooxygenase aflN are involved in conversion of VERA to demethylsterigmatocystin (DMST). AflX and aflY seem also involved in this step, through probable aflX-mediated epoxide ring-opening step following versicolorin A oxidation and aflY-mediated Baeyer-Villiger oxidation required for the formation of the xanthone ring. The methyltransferase aflO then leads to the modification of DMST to sterigmatocystin (ST), and of DMDHST to dihydrosterigmatocystin (DHST). Both ST and DHST are then substrates of the O-methyltransferase aflP to yield O-methylsterigmatocystin (OMST) and dihydro-O-methylsterigmatocystin (DHOMST), respectively. Finally OMST is converted to aflatoxins B1 and G1, and DHOMST to aflatoxins B2 and G2, via the action of several enzymes including O-methylsterigmatocystin oxidoreductase aflQ, the cytochrome P450 monooxygenase aflU, but also the NADH-dependent flavin oxidoreductase nadA which is specifically required for the synthesis of AFG1. In Aspergillus parasiticus (strain ATCC 56775 / NRRL 5862 / SRRC 143 / SU-1), this protein is Sterigmatocystin 8-O-methyltransferase.